Reading from the N-terminus, the 86-residue chain is Large ribosomal subunit protein bL27 (86 aa).

Positions 1–10 are enriched in gly residues; it reads MAQKKGGGST. The interval 1–21 is disordered; that stretch reads MAQKKGGGSTRNGRDSESKRL.

This sequence belongs to the bacterial ribosomal protein bL27 family.

The chain is Large ribosomal subunit protein bL27 from Cupriavidus necator (strain ATCC 17699 / DSM 428 / KCTC 22496 / NCIMB 10442 / H16 / Stanier 337) (Ralstonia eutropha).